The sequence spans 168 residues: Cyclic pyranopterin monophosphate synthase (168 aa).

Substrate-binding positions include 81–83 and 117–118; these read LCH and ME. Residue aspartate 132 is part of the active site.

Belongs to the MoaC family. As to quaternary structure, homohexamer; trimer of dimers.

The enzyme catalyses (8S)-3',8-cyclo-7,8-dihydroguanosine 5'-triphosphate = cyclic pyranopterin phosphate + diphosphate. It participates in cofactor biosynthesis; molybdopterin biosynthesis. Catalyzes the conversion of (8S)-3',8-cyclo-7,8-dihydroguanosine 5'-triphosphate to cyclic pyranopterin monophosphate (cPMP). The polypeptide is Cyclic pyranopterin monophosphate synthase (Deinococcus radiodurans (strain ATCC 13939 / DSM 20539 / JCM 16871 / CCUG 27074 / LMG 4051 / NBRC 15346 / NCIMB 9279 / VKM B-1422 / R1)).